A 106-amino-acid chain; its full sequence is Urease subunit beta (106 aa).

It belongs to the urease beta subunit family. As to quaternary structure, heterotrimer of UreA (gamma), UreB (beta) and UreC (alpha) subunits. Three heterotrimers associate to form the active enzyme.

Its subcellular location is the cytoplasm. It catalyses the reaction urea + 2 H2O + H(+) = hydrogencarbonate + 2 NH4(+). It functions in the pathway nitrogen metabolism; urea degradation; CO(2) and NH(3) from urea (urease route): step 1/1. The chain is Urease subunit beta from Escherichia coli O157:H7.